Consider the following 263-residue polypeptide: Outer membrane lipoprotein 3 (263 aa).

A signal peptide spans 1 to 19 (MKIMKLAGAVAIFSLFLTA). The N-palmitoyl cysteine moiety is linked to residue cysteine 20. A lipid anchor (S-diacylglycerol cysteine) is attached at cysteine 20.

It belongs to the NlpA lipoprotein family.

The protein resides in the cell outer membrane. The chain is Outer membrane lipoprotein 3 (plpC) from Mannheimia haemolytica (Pasteurella haemolytica).